The chain runs to 707 residues: Zinc finger protein 60 (707 aa).

Positions 14–86 constitute a KRAB domain; the sequence is VTFRDVAVDF…VKKETGRPSQ (73 aa). 19 C2H2-type zinc fingers span residues 173–195, 201–223, 229–251, 257–282, 288–310, 316–338, 344–366, 372–394, 400–422, 428–450, 456–478, 484–506, 512–534, 540–562, 568–590, 596–618, 624–646, 652–674, and 680–702; these read YKCKDCGKCFGCKSNLHQHESIH, YECKDCGKTFRLPQMLSRHQKSH, FECNICGKSFHLPTLLQYHKNIH, FECEECGKSFKSFNRISTLFQHRTIH, YKCNVCGKAFNRRSNLLQHQKIH, FHCKVCGKAFTVLAQLTRHENIH, FECKQCGKIFSNGSYLLRHYDTH, FECNICGKAFRLHLYLSEHQKTH, FKCKLCESAFRRKYQLSEHQRIH, YQCKDCWEFFRRRSNFIEHQSIH, FECKDCGKVFRLNIHLIRHQRFH, FECKECGKAFHFSSQLNNHKTSH, FECKECGKSFKRVSSLVEHRIIH, YKCNACGRAFNRRSNLMQHEKIH, FECKDCGKAFTVLAQLTRHQTIH, YECEQCGSAFRLPYQLTQHQRIH, FQCKECGRAFVRSTGLRIHERIH, FQCKECGEAFQYHYQFLGHFRIH, and YECSECGKYFTYGRDLKVHQSIH.

This sequence belongs to the krueppel C2H2-type zinc-finger protein family. As to expression, expressed widely and evenly in most adult mouse tissues.

The protein localises to the nucleus. Its function is as follows. May have a role during differentiation processes. The sequence is that of Zinc finger protein 60 (Zfp60) from Mus musculus (Mouse).